Reading from the N-terminus, the 183-residue chain is Ribosome maturation factor RimM (183 aa).

The PRC barrel domain maps to 104–183; that stretch reads EGDYYWKDLM…TIEVDWDPGF (80 aa).

Belongs to the RimM family. In terms of assembly, binds ribosomal protein uS19.

It is found in the cytoplasm. An accessory protein needed during the final step in the assembly of 30S ribosomal subunit, possibly for assembly of the head region. Essential for efficient processing of 16S rRNA. May be needed both before and after RbfA during the maturation of 16S rRNA. It has affinity for free ribosomal 30S subunits but not for 70S ribosomes. The chain is Ribosome maturation factor RimM from Salmonella arizonae (strain ATCC BAA-731 / CDC346-86 / RSK2980).